A 514-amino-acid chain; its full sequence is Cobyric acid synthase (514 aa).

The GATase cobBQ-type domain occupies 249–448; the sequence is LIDIAVIKLP…VHGVFDNDEI (200 aa). The active-site Nucleophile is the C330. H440 is an active-site residue.

Belongs to the CobB/CobQ family. CobQ subfamily.

It participates in cofactor biosynthesis; adenosylcobalamin biosynthesis. Its function is as follows. Catalyzes amidations at positions B, D, E, and G on adenosylcobyrinic A,C-diamide. NH(2) groups are provided by glutamine, and one molecule of ATP is hydrogenolyzed for each amidation. The chain is Cobyric acid synthase from Ruminiclostridium cellulolyticum (strain ATCC 35319 / DSM 5812 / JCM 6584 / H10) (Clostridium cellulolyticum).